The following is a 240-amino-acid chain: Inhibitor of growth protein 5 (240 aa).

Positions 115-165 (MDGSDFESTGARSLKKGRSQKEKRSSRGRGRRTSEEDTPKKKKHKSGSEFT) are disordered. The residue at position 118 (Ser-118) is a Phosphoserine. Arg-126 carries the omega-N-methylarginine modification. Residues 186-235 (PTYCLCHQVSYGEMIGCDNPDCPIEWFHFACVDLTTKPKGKWFCPRCVQE) form a PHD-type zinc finger. 8 residues coordinate Zn(2+): Cys-189, Cys-191, Cys-202, Cys-207, His-213, Cys-216, Cys-229, and Cys-232.

The protein belongs to the ING family. Component of the HBO1 complex composed of KAT7/HBO1, MEAF6, ING5, and one scaffold subunit: complexes containing BRPF scaffold (BRPF1, BRD1/BRPF2 or BRPF3) direct KAT7/HBO1 specificity towards H3K14ac, while complexes containing JADE scaffold (JADE1, JADE2 and JADE3) mediate acetylation of histone H4. Component of the MOZ/MORF complex composed at least of ING5, KAT6A, KAT6B, MEAF6 and one of BRPF1, BRD1/BRPF2 and BRPF3. Interacts with H3K4me3 and to a lesser extent with H3K4me2. Interacts with EP300 and p53/TP53. Interacts with INCA1.

The protein localises to the nucleus. It is found in the chromosome. Its function is as follows. Component of the HBO1 complex, which specifically mediates acetylation of histone H3 at 'Lys-14' (H3K14ac) and, to a lower extent, acetylation of histone H4. Component of the MOZ/MORF complex which has a histone H3 acetyltransferase activity. Through chromatin acetylation it may regulate DNA replication and may function as a transcriptional coactivator. Inhibits cell growth, induces a delay in S-phase progression and enhances Fas-induced apoptosis in an INCA1-dependent manner. In Mus musculus (Mouse), this protein is Inhibitor of growth protein 5 (Ing5).